Reading from the N-terminus, the 130-residue chain is Small ribosomal subunit protein bS6 (130 aa).

The interval 99-130 (ASPMVKAKDERRERHDFASEANDDSEAGDSEE) is disordered. Over residues 104 to 116 (KAKDERRERHDFA) the composition is skewed to basic and acidic residues. Positions 119–130 (ANDDSEAGDSEE) are enriched in acidic residues.

It belongs to the bacterial ribosomal protein bS6 family.

In terms of biological role, binds together with bS18 to 16S ribosomal RNA. This Yersinia enterocolitica serotype O:8 / biotype 1B (strain NCTC 13174 / 8081) protein is Small ribosomal subunit protein bS6.